The primary structure comprises 101 residues: UPF0235 protein MmarC5_0538 (101 aa).

The protein belongs to the UPF0235 family.

This chain is UPF0235 protein MmarC5_0538, found in Methanococcus maripaludis (strain C5 / ATCC BAA-1333).